Here is a 2162-residue protein sequence, read N- to C-terminus: Calpain-type cysteine protease ADL1 (2162 aa).

The signal sequence occupies residues 1–33; the sequence is MEEEEHRGVVLVCSICGFLFAVLGPLSFWILWA. The Extracellular segment spans residues 34 to 70; that stretch reads VNWRPWRLYSWIYARKWPAYVQGPQLSTLCSFFTLFA. A helical transmembrane segment spans residues 71 to 91; it reads WLVVVSPITVLLVWGGILIAL. Residues 92–95 are Cytoplasmic-facing; that stretch reads LERN. The helical transmembrane segment at 96–116 threads the bilayer; that stretch reads IIGLAVIMVGVALLLSFYSIM. The Extracellular portion of the chain corresponds to 117-127; the sequence is LWWRTQWQSSK. The chain crosses the membrane as a helical span at residues 128-148; that stretch reads AVAYLLLLAVGLLCAYEFCAV. Residues 149–164 are Cytoplasmic-facing; the sequence is YVTTGASASELNSPSG. A helical membrane pass occupies residues 165–185; sequence FFFGVSAISLAINMLFISKIL. At 186–236 the chain is on the extracellular side; that stretch reads FNGSGFDVDEYVRRLYKFAYSDCVEVAPVSCSPDPPDPSELYMTKSSRVLH. Residues 237 to 257 traverse the membrane as a helical segment; that stretch reads LGLLYLCSLMVLVVYSILYGL. Residues 258–264 lie on the Cytoplasmic side of the membrane; sequence TSKEARW. The helical transmembrane segment at 265–285 threads the bilayer; that stretch reads LGALTSVAVVILDWNLGLCSF. Topologically, residues 286–294 are extracellular; the sequence is RFELLKSRM. Residues 295–315 form a helical membrane-spanning segment; it reads IALFVAGTSRVFLICFGVHYW. At 316–320 the chain is on the cytoplasmic side; that stretch reads YLGHC. Residues 321–341 traverse the membrane as a helical segment; it reads ISYAFVASVLLAAAVSCWLSI. Over 342 to 626 the chain is Extracellular; the sequence is SNPSVARIDA…LMFHQVAGSP (285 aa). Positions 366 to 403 are disordered; the sequence is KGQTSSSNSSDGCGSSVKRSSGSVEAGPHGNATDSMYR. Over residues 370-381 the composition is skewed to low complexity; the sequence is SSSNSSDGCGSS. The chain crosses the membrane as a helical span at residues 627 to 647; it reads IRAFVVFTLIFIIETVTVAVH. Topologically, residues 648–663 are cytoplasmic; it reads RPKPIKVINATHEQFE. A helical membrane pass occupies residues 664–684; the sequence is FGFSILLLSPVVCSIMAFIWS. At 685 to 697 the chain is on the extracellular side; sequence LCAEEMTMTSKPR. A helical membrane pass occupies residues 698 to 718; the sequence is KYGFIAWLLSTCVGLLLSFLS. The Cytoplasmic portion of the chain corresponds to 719–722; the sequence is KSSV. Residues 723-743 form a helical membrane-spanning segment; the sequence is ILGLSLTVPLMVACLSFAIPI. At 744-773 the chain is on the extracellular side; sequence WMRNGYRFWIPGGELDSRENIRQAPGKKER. Residues 774-794 form a helical membrane-spanning segment; that stretch reads ALFAISITVFTASVIGLGAIV. Topologically, residues 795-825 are cytoplasmic; that stretch reads SAKPLDALGYKGWDADKKSFYSPYATSMYLG. Residues 826 to 846 form a helical membrane-spanning segment; sequence WALSSTIAVLATGVIPIVAWF. Topologically, residues 847–856 are extracellular; the sequence is ATYRFSPSSA. The chain crosses the membrane as a helical span at residues 857–877; it reads ICVGLFATVLVSFCGVSYWGV. Residues 878 to 890 lie on the Cytoplasmic side of the membrane; it reads VNSRQDGVPLKAD. Residues 891–911 traverse the membrane as a helical segment; it reads FLAALLPLLCIPAVFSLFTGM. Residues 912 to 924 lie on the Extracellular side of the membrane; that stretch reads YKWKDDDWKISRG. A helical transmembrane segment spans residues 925–945; sequence VYLFVGMGVLLLLGAISAVIV. At 946 to 949 the chain is on the cytoplasmic side; sequence TIRP. Residues 950-970 traverse the membrane as a helical segment; the sequence is WTVGVACLLVILFLVFAIGVI. Residues 971–984 are Extracellular-facing; sequence HYWTSNNFYLTRTQ. A helical transmembrane segment spans residues 985–1005; that stretch reads MLLVCSLAFLLALAAFLMGLF. Residues 1006 to 1019 are Cytoplasmic-facing; that stretch reads QEKPFVGASIGYFS. The chain crosses the membrane as a helical span at residues 1020–1040; that stretch reads FLFLLTGRALTVLLSPPIVVY. Topologically, residues 1041–1063 are extracellular; it reads SPRVLPVYVYDAHADSAKNVSYA. The chain crosses the membrane as a helical span at residues 1064–1084; the sequence is FLILYGIALATEVWGVIASLI. Residues 1085 to 2162 lie on the Cytoplasmic side of the membrane; that stretch reads LNPPFIGAAI…TKAPIKLEAV (1078 aa). Residues serine 1372 and serine 1377 each carry the phosphoserine modification. The 194-residue stretch at 1418–1611 folds into the Calpain catalytic 1 domain; the sequence is TGRHCGEIDL…ICSAEYGLFD (194 aa). Serine 1668 is subject to Phosphoserine. The 303-residue stretch at 1706–2008 folds into the Calpain catalytic 2 domain; that stretch reads NFTDQEFPPD…FRSIYVCRVY (303 aa). Catalysis depends on residues cysteine 1772, histidine 1930, and asparagine 1950.

Belongs to the peptidase C2 family. In terms of processing, autocatalytic proteolytic cleavage leading to the production of mainly cytoplasmic localized subproducts of about 85 and 120 kDa. As to expression, ubiquitously expressed with higher levels in embryos, vasculatures, leaf primordia, leaf margins, and shoot apical meristem (SAM).

It localises to the endoplasmic reticulum membrane. The protein resides in the cytoplasm. It is found in the cell membrane. The protein localises to the endosome membrane. In terms of biological role, essential protease involved in epiderm development. Required for aleurone cell development in the endosperm probably by maintaining and restricting the aleurone and embryonic epidermal L1 cell-layer fates as well as meristems organization. Involved in the maintenance of adaxial/abaxial axis information in developing leaves, probably by regulating cell proliferation and expansion. Does not need calcium ions to be active. The protein is Calpain-type cysteine protease ADL1 (ADL1) of Oryza sativa subsp. japonica (Rice).